The sequence spans 541 residues: Chaperonin GroEL 2 (541 aa).

ATP-binding positions include 29–32, 86–90, G413, 476–478, and D492; these read TLGP, DGTTT, and NAA.

The protein belongs to the chaperonin (HSP60) family. In terms of assembly, forms a cylinder of 14 subunits composed of two heptameric rings stacked back-to-back. Interacts with the co-chaperonin GroES.

Its subcellular location is the secreted. The protein resides in the capsule. It localises to the cell surface. It is found in the cell wall. It carries out the reaction ATP + H2O + a folded polypeptide = ADP + phosphate + an unfolded polypeptide.. Together with its co-chaperonin GroES, plays an essential role in assisting protein folding. The GroEL-GroES system forms a nano-cage that allows encapsulation of the non-native substrate proteins and provides a physical environment optimized to promote and accelerate protein folding. In Mycobacterium ulcerans (strain Agy99), this protein is Chaperonin GroEL 2.